The chain runs to 319 residues: Pantothenate kinase (319 aa).

An ATP-binding site is contributed by 101–108 (GSVAVGKS).

This sequence belongs to the prokaryotic pantothenate kinase family.

Its subcellular location is the cytoplasm. The enzyme catalyses (R)-pantothenate + ATP = (R)-4'-phosphopantothenate + ADP + H(+). It participates in cofactor biosynthesis; coenzyme A biosynthesis; CoA from (R)-pantothenate: step 1/5. The protein is Pantothenate kinase of Clavibacter sepedonicus (Clavibacter michiganensis subsp. sepedonicus).